A 501-amino-acid chain; its full sequence is Ribose import ATP-binding protein RbsA (501 aa).

2 consecutive ABC transporter domains span residues 6–242 and 253–495; these read LQLS…VGRK and KHGE…VGKK. Position 38–45 (38–45) interacts with ATP; the sequence is GENGAGKS.

This sequence belongs to the ABC transporter superfamily. Ribose importer (TC 3.A.1.2.1) family. In terms of assembly, the complex is composed of an ATP-binding protein (RbsA), two transmembrane proteins (RbsC) and a solute-binding protein (RbsB).

It localises to the cell inner membrane. The enzyme catalyses D-ribose(out) + ATP + H2O = D-ribose(in) + ADP + phosphate + H(+). In terms of biological role, part of the ABC transporter complex RbsABC involved in ribose import. Responsible for energy coupling to the transport system. The protein is Ribose import ATP-binding protein RbsA of Vibrio parahaemolyticus serotype O3:K6 (strain RIMD 2210633).